Reading from the N-terminus, the 395-residue chain is Enolase (395 aa).

Residues histidine 136 and glutamate 145 each contribute to the substrate site. Glutamate 188 (proton donor) is an active-site residue. Positions 223, 271, and 296 each coordinate Mg(2+). 2 residues coordinate substrate: glutamate 271 and aspartate 296. Residue lysine 321 is the Proton acceptor of the active site. Residues 348–351 (SHRS) and lysine 372 each bind substrate.

It belongs to the enolase family. In terms of assembly, homodimer. The cofactor is Mg(2+).

The protein localises to the cytoplasm. It carries out the reaction (2R)-2-phosphoglycerate = phosphoenolpyruvate + H2O. It functions in the pathway carbohydrate degradation; glycolysis; pyruvate from D-glyceraldehyde 3-phosphate: step 4/5. This is Enolase from Alligator mississippiensis (American alligator).